The primary structure comprises 316 residues: Ornithine carbamoyltransferase (316 aa).

Carbamoyl phosphate-binding positions include 59 to 62 (STRT), glutamine 86, arginine 110, and 137 to 140 (HPCQ). Residues asparagine 168, aspartate 232, and 236–237 (SM) contribute to the L-ornithine site. Residues 273-274 (CL) and arginine 301 each bind carbamoyl phosphate.

It belongs to the aspartate/ornithine carbamoyltransferase superfamily. OTCase family.

The protein resides in the cytoplasm. The catalysed reaction is carbamoyl phosphate + L-ornithine = L-citrulline + phosphate + H(+). The protein operates within amino-acid biosynthesis; L-arginine biosynthesis; L-arginine from L-ornithine and carbamoyl phosphate: step 1/3. Functionally, reversibly catalyzes the transfer of the carbamoyl group from carbamoyl phosphate (CP) to the N(epsilon) atom of ornithine (ORN) to produce L-citrulline. This chain is Ornithine carbamoyltransferase, found in Listeria innocua serovar 6a (strain ATCC BAA-680 / CLIP 11262).